The following is a 382-amino-acid chain: UDP-4-amino-4-deoxy-L-arabinose--oxoglutarate aminotransferase (382 aa).

Residue Lys183 is modified to N6-(pyridoxal phosphate)lysine.

This sequence belongs to the DegT/DnrJ/EryC1 family. ArnB subfamily. Homodimer. The cofactor is pyridoxal 5'-phosphate.

The enzyme catalyses UDP-4-amino-4-deoxy-beta-L-arabinose + 2-oxoglutarate = UDP-beta-L-threo-pentopyranos-4-ulose + L-glutamate. Its pathway is nucleotide-sugar biosynthesis; UDP-4-deoxy-4-formamido-beta-L-arabinose biosynthesis; UDP-4-deoxy-4-formamido-beta-L-arabinose from UDP-alpha-D-glucuronate: step 2/3. It participates in bacterial outer membrane biogenesis; lipopolysaccharide biosynthesis. Catalyzes the conversion of UDP-4-keto-arabinose (UDP-Ara4O) to UDP-4-amino-4-deoxy-L-arabinose (UDP-L-Ara4N). The modified arabinose is attached to lipid A and is required for resistance to polymyxin and cationic antimicrobial peptides. The protein is UDP-4-amino-4-deoxy-L-arabinose--oxoglutarate aminotransferase of Pseudomonas syringae pv. syringae (strain B728a).